Consider the following 276-residue polypeptide: Large ribosomal subunit protein uL2 (276 aa).

Positions 219 to 276 (TVRGSVMNPNDHPHGGGEGKQPIGRKQQMTPWGKKARGIKTRDKKKASTSMIVRRRNG) are disordered. Positions 252–276 (KKARGIKTRDKKKASTSMIVRRRNG) are enriched in basic residues.

It belongs to the universal ribosomal protein uL2 family. In terms of assembly, part of the 50S ribosomal subunit. Forms a bridge to the 30S subunit in the 70S ribosome.

One of the primary rRNA binding proteins. Required for association of the 30S and 50S subunits to form the 70S ribosome, for tRNA binding and peptide bond formation. It has been suggested to have peptidyltransferase activity; this is somewhat controversial. Makes several contacts with the 16S rRNA in the 70S ribosome. This is Large ribosomal subunit protein uL2 from Acholeplasma laidlawii (strain PG-8A).